A 222-amino-acid polypeptide reads, in one-letter code: MAIVVVTGTNTDVGKTIASAAVCQHYSRQGFRVVPVKPVQTGEPKGSGDAQTIEKLTGIVGKCFARFPEPLAPNLSAQRAGMQQLNLEEIVNKIRELDGPQTVVVVEGAGGLLVRLADSFTIADVAAQLDAPLIVVTNMALGSLNAAELTVEAAQRRGLKVLGLIGGSMPKNPDLATSLNVAEMEKVTGIPLWGSIAEGAGQLSKEAFCQLVEDLHLPTMWP.

Residue aspartate 12–isoleucine 17 coordinates ATP. Mg(2+) is bound at residue threonine 16. Residue lysine 37 is part of the active site. Position 41 (threonine 41) interacts with substrate. ATP is bound by residues aspartate 49, glutamate 107–glycine 110, glycine 167–serine 168, and alanine 197–glycine 199. The Mg(2+) site is built by aspartate 49 and glutamate 107.

Belongs to the dethiobiotin synthetase family. Homodimer. It depends on Mg(2+) as a cofactor.

The protein localises to the cytoplasm. It carries out the reaction (7R,8S)-7,8-diammoniononanoate + CO2 + ATP = (4R,5S)-dethiobiotin + ADP + phosphate + 3 H(+). The protein operates within cofactor biosynthesis; biotin biosynthesis; biotin from 7,8-diaminononanoate: step 1/2. Its function is as follows. Catalyzes a mechanistically unusual reaction, the ATP-dependent insertion of CO2 between the N7 and N8 nitrogen atoms of 7,8-diaminopelargonic acid (DAPA, also called 7,8-diammoniononanoate) to form a ureido ring. The chain is ATP-dependent dethiobiotin synthetase BioD from Corynebacterium diphtheriae (strain ATCC 700971 / NCTC 13129 / Biotype gravis).